We begin with the raw amino-acid sequence, 132 residues long: Agouti-signaling protein (132 aa).

A signal peptide spans 1–22; that stretch reads MDVTRLLLATLLVFLCFFTAYS. N39 carries an N-linked (GlcNAc...) asparagine glycan. The interval 57 to 88 is disordered; the sequence is KKSKQTSRKEAEKKRSSKKEASMKKVARPRTP. Basic and acidic residues predominate over residues 63–79; sequence SRKEAEKKRSSKKEASM. 5 disulfides stabilise this stretch: C93–C108, C100–C114, C107–C125, C111–C132, and C116–C123. The Agouti domain occupies 93-132; that stretch reads CVATRDSCKPPAPACCDPCASCQCRFFRSACSCRVLSLNC.

It is found in the secreted. Its function is as follows. Involved in the regulation of melanogenesis. The binding of ASP to MC1R precludes alpha-MSH initiated signaling and thus blocks production of cAMP, leading to a down-regulation of eumelanogenesis (brown/black pigment) and thus increasing synthesis of pheomelanin (yellow/red pigment). The protein is Agouti-signaling protein (ASIP) of Macaca assamensis (Assam macaque).